The following is a 201-amino-acid chain: MDSLSPKRAAVLAFLQQQAQAGLAPSLAEIAQAFGFASRNAAQKHVQALAEAGLIELVPNRKRGIRVPGGAGPDALLALPVLGRVAAGVPIGADIGLDRQLWLDRSLFALRPDYLLQVQGDSMIDDGILEGDLVGVQRSSDARNGQIVVARVDGEITIKRLERSADAIRLLPRNPAHAPIVVAADADFAIEGVYCGLIRQG.

Residues 27-47 (LAEIAQAFGFASRNAAQKHVQ) constitute a DNA-binding region (H-T-H motif). Active-site for autocatalytic cleavage activity residues include S122 and K159.

It belongs to the peptidase S24 family. As to quaternary structure, homodimer.

The enzyme catalyses Hydrolysis of Ala-|-Gly bond in repressor LexA.. Its function is as follows. Represses a number of genes involved in the response to DNA damage (SOS response), including recA and lexA. In the presence of single-stranded DNA, RecA interacts with LexA causing an autocatalytic cleavage which disrupts the DNA-binding part of LexA, leading to derepression of the SOS regulon and eventually DNA repair. This is LexA repressor 1 from Xanthomonas campestris pv. campestris (strain ATCC 33913 / DSM 3586 / NCPPB 528 / LMG 568 / P 25).